A 339-amino-acid polypeptide reads, in one-letter code: Phospho-N-acetylmuramoyl-pentapeptide-transferase (339 aa).

The next 10 membrane-spanning stretches (helical) occupy residues 4–24, 53–73, 80–100, 113–133, 145–165, 176–196, 202–222, 228–248, 253–273, and 318–338; these read TTII…PFFI, MGGT…AFVL, AFGA…IGFL, GLTA…FYLV, LFGF…FWVV, GIDG…SVIA, FDVL…FVYN, VFMG…ISIT, WTLL…MLQV, and VDFF…AILY.

This sequence belongs to the glycosyltransferase 4 family. MraY subfamily. Mg(2+) serves as cofactor.

The protein resides in the cell membrane. The catalysed reaction is UDP-N-acetyl-alpha-D-muramoyl-L-alanyl-gamma-D-glutamyl-L-lysyl-D-alanyl-D-alanine + di-trans,octa-cis-undecaprenyl phosphate = Mur2Ac(oyl-L-Ala-gamma-D-Glu-L-Lys-D-Ala-D-Ala)-di-trans,octa-cis-undecaprenyl diphosphate + UMP. It functions in the pathway cell wall biogenesis; peptidoglycan biosynthesis. In terms of biological role, catalyzes the initial step of the lipid cycle reactions in the biosynthesis of the cell wall peptidoglycan: transfers peptidoglycan precursor phospho-MurNAc-pentapeptide from UDP-MurNAc-pentapeptide onto the lipid carrier undecaprenyl phosphate, yielding undecaprenyl-pyrophosphoryl-MurNAc-pentapeptide, known as lipid I. This chain is Phospho-N-acetylmuramoyl-pentapeptide-transferase, found in Streptococcus mutans serotype c (strain ATCC 700610 / UA159).